The primary structure comprises 309 residues: Mitochondrial substrate carrier family protein ancA (309 aa).

3 Solcar repeats span residues 10–102, 114–203, and 216–299; these read SSFV…YKKF, KFFI…AKGI, and ASWG…IQKL. Helical transmembrane passes span 12–41, 79–103, 113–133, 181–201, and 215–235; these read FVKD…LLLQ, LANV…KKFF, TKFF…SLLF, VSVG…DTAK, and WASW…SYPF. Residues Arg84 and Lys96 each coordinate ADP. Arg239 is a binding site for ADP. The tract at residues 239–244 is important for transport activity; the sequence is RRRMMM. The Nucleotide carrier signature motif motif lies at 239-244; it reads RRRMMM. The helical transmembrane segment at 276–293 threads the bilayer; that stretch reads ALSNAIRGSGGALVLVIY.

Belongs to the mitochondrial carrier (TC 2.A.29) family. As to quaternary structure, monomer.

It localises to the mitochondrion inner membrane. The enzyme catalyses ADP(in) + ATP(out) = ADP(out) + ATP(in). The matrix-open state (m-state) is inhibited by the membrane-permeable bongkrekic acid (BKA). The cytoplasmic-open state (c-state) is inhibited by the membrane-impermeable toxic inhibitor carboxyatractyloside (CATR). Functionally, ADP:ATP antiporter that mediates import of ADP into the mitochondrial matrix for ATP synthesis, and export of ATP out to fuel the cell. Cycles between the cytoplasmic-open state (c-state) and the matrix-open state (m-state): operates by the alternating access mechanism with a single substrate-binding site intermittently exposed to either the cytosolic (c-state) or matrix (m-state) side of the inner mitochondrial membrane. The polypeptide is Mitochondrial substrate carrier family protein ancA (ancA) (Dictyostelium discoideum (Social amoeba)).